A 529-amino-acid polypeptide reads, in one-letter code: Extracellular signal-regulated kinase 1 (529 aa).

2 disordered regions span residues 1-20 and 100-131; these read MEPE…THQS and QQNQ…SNFN. Residues 8 to 20 are compositionally biased toward polar residues; it reads FQSQMDSDNTHQS. Residues 100 to 117 are compositionally biased toward low complexity; sequence QQNQQQQSQQMTQQQLQQ. The Protein kinase domain maps to 149–439; that stretch reads YSIVKCIGHG…EALAHPYFQS (291 aa). Residues 155 to 163 and lysine 178 each bind ATP; that span reads IGHGAYGVV. Aspartate 275 acts as the Proton acceptor in catalysis. Position 309 is a phosphothreonine (threonine 309). The short motif at 309 to 311 is the TXY element; it reads TEY. At tyrosine 311 the chain carries Phosphotyrosine.

Belongs to the protein kinase superfamily. CMGC Ser/Thr protein kinase family. MAP kinase subfamily. Mg(2+) serves as cofactor. Post-translationally, dually phosphorylated on Thr-309 and Tyr-311, which activates the enzyme.

It carries out the reaction L-seryl-[protein] + ATP = O-phospho-L-seryl-[protein] + ADP + H(+). It catalyses the reaction L-threonyl-[protein] + ATP = O-phospho-L-threonyl-[protein] + ADP + H(+). With respect to regulation, activated by tyrosine and threonine phosphorylation. Kinase involved in a signal transduction pathway. This chain is Extracellular signal-regulated kinase 1 (erkA), found in Dictyostelium discoideum (Social amoeba).